Here is a 180-residue protein sequence, read N- to C-terminus: Cytidylate kinase (180 aa).

Gly7 to Thr15 is an ATP binding site.

The protein belongs to the cytidylate kinase family. Type 2 subfamily.

Its subcellular location is the cytoplasm. It carries out the reaction CMP + ATP = CDP + ADP. It catalyses the reaction dCMP + ATP = dCDP + ADP. This Methanosarcina acetivorans (strain ATCC 35395 / DSM 2834 / JCM 12185 / C2A) protein is Cytidylate kinase.